The sequence spans 120 residues: 2-amino-4-hydroxy-6-hydroxymethyldihydropteridine pyrophosphokinase (120 aa).

The protein belongs to the HPPK family.

It catalyses the reaction 6-hydroxymethyl-7,8-dihydropterin + ATP = (7,8-dihydropterin-6-yl)methyl diphosphate + AMP + H(+). It functions in the pathway cofactor biosynthesis; tetrahydrofolate biosynthesis; 2-amino-4-hydroxy-6-hydroxymethyl-7,8-dihydropteridine diphosphate from 7,8-dihydroneopterin triphosphate: step 4/4. Catalyzes the transfer of pyrophosphate from adenosine triphosphate (ATP) to 6-hydroxymethyl-7,8-dihydropterin, an enzymatic step in folate biosynthesis pathway. The protein is 2-amino-4-hydroxy-6-hydroxymethyldihydropteridine pyrophosphokinase (folK) of Pseudomonas putida (Arthrobacter siderocapsulatus).